We begin with the raw amino-acid sequence, 414 residues long: Ena/VASP-like protein (414 aa).

The 112-residue stretch at 1 to 112 (MSEQSICQAR…NAMLFALNIM (112 aa)) folds into the WH1 domain. Ser130 is subject to Phosphoserine. Residues 157–369 (ATGPILPPGH…SRVKPAGSVN (213 aa)) are disordered. Pro residues predominate over residues 179–204 (GPPPPPPPPVPPPPTGSTPPPPPPLP). Residues 217–228 (SASGLAAALAGA) are compositionally biased toward low complexity. Residues 220–240 (GLAAALAGAKLRRVQRPEDAS) form an EVH2 block A region. The tract at residues 220 to 411 (GLAAALAGAK…DAIRQELSGI (192 aa)) is EVH2. A KLKR motif is present at residues 229–232 (KLRR). Low complexity predominate over residues 240-251 (SGGSSPSGTSKS). 2 positions are modified to phosphoserine: Ser244 and Ser257. Residues 263-280 (GGLMEEMNKLLAKRRKAA) are EVH2 block B. Positions 297–318 (EDPSTSPSPGTRATSQPPNSSE) are enriched in polar residues. Ser302, Ser304, Ser327, Ser329, Ser339, Ser347, Ser352, and Ser367 each carry phosphoserine. The span at 319–329 (AGRKPWERSNS) shows a compositional bias: basic and acidic residues. Positions 340–360 (RTPSVAKSPEAKSPLQSQPHS) are required for interaction with ZDHHC17. An EVH2 block C region spans residues 377 to 411 (DLDRMKQEILEEVVRELHKVKEEIIDAIRQELSGI).

This sequence belongs to the Ena/VASP family. Homotetramer. Binds to the SH3 domains of ABL1, LYN and SRC. Also binds to profilin, with preference for isoform IIa of PFN2, and the WW domain of APBB1/FE65. Binds to SEMA6A. Interacts, via the Pro-rich region, with the C-terminal SH3 domain of DNMBP. Interacts with RAPH1. Binds, via the EVH1 domain, the Pro-rich domain of Listeria monocytogenes actA. Binds, via the EVH1 domain, the Pro-rich domain of ZYX. Interacts with FYB1. Interacts with ZDHHC17. Post-translationally, phosphorylated by PKA; phosphorylation abolishes binding to SH3 domains of ABL and SRC. As to expression, highest expression in thymus and spleen (at protein level). Low levels in placenta, ovary, testis, fat and lung (at protein level). Isoform 1 and isoform 2 are expressed in cortical neurons and glial cells.

It is found in the cytoplasm. Its subcellular location is the cytoskeleton. It localises to the stress fiber. The protein localises to the cell projection. The protein resides in the lamellipodium. Ena/VASP proteins are actin-associated proteins involved in a range of processes dependent on cytoskeleton remodeling and cell polarity such as axon guidance and lamellipodial and filopodial dynamics in migrating cells. EVL enhances actin nucleation and polymerization. The polypeptide is Ena/VASP-like protein (Evl) (Mus musculus (Mouse)).